A 315-amino-acid chain; its full sequence is Rhomboid-related protein 4 (315 aa).

The Cytoplasmic portion of the chain corresponds to 1–21; the sequence is MQRRSRGINTGLILLLSQIFH. The helical transmembrane segment at 22 to 42 threads the bilayer; it reads VGINNIPPVTLATLALNIWFF. Residues 43-106 lie on the Extracellular side of the membrane; the sequence is LNPQKPLYSS…RRLGSRWFAY (64 aa). A helical membrane pass occupies residues 107 to 127; that stretch reads VITAFSVLTGVVYLLLQFAVA. Residues 128–138 lie on the Cytoplasmic side of the membrane; it reads EFMDEPDFKRS. A helical membrane pass occupies residues 139 to 157; it reads CAVGFSGVLFALKVLNNHY. The Nucleophile role is filled by serine 144. Residues 158-180 are Extracellular-facing; it reads CPGGFVNILGFPVPNRFACWVEL. A helical membrane pass occupies residues 181-201; that stretch reads VAIHLFSPGTSFAGHLAGILV. The active site involves histidine 195. The Cytoplasmic portion of the chain corresponds to 202–315; that stretch reads GLMYTQGPLK…RQRLHRFDSQ (114 aa). A ubiquitin-binding domain (UBD) region spans residues 269 to 284; that stretch reads SEEEQLERALQASLWD. The tract at residues 283–315 is disordered; that stretch reads WDRGNTRNSPPPYGFHLSPEEMRRQRLHRFDSQ. Positions 300-315 are enriched in basic and acidic residues; that stretch reads SPEEMRRQRLHRFDSQ. Residues 301-315 are VCP/p97-interacting motif (VIM); it reads PEEMRRQRLHRFDSQ.

The protein belongs to the peptidase S54 family. As to quaternary structure, interacts (via C-terminal domain) with VCP. Interacts with ubiquitin and ubiquitinated proteins. Interacts with BIK and STEAP3. Expressed strongly in testis.

The protein localises to the endoplasmic reticulum membrane. It localises to the mitochondrion membrane. The catalysed reaction is Cleaves type-1 transmembrane domains using a catalytic dyad composed of serine and histidine that are contributed by different transmembrane domains.. Inhibited by aprotinin. Its function is as follows. Intramembrane-cleaving serine protease that cleaves single transmembrane or multi-pass membrane proteins in the hydrophobic plane of the membrane, luminal loops and juxtamembrane regions. Involved in regulated intramembrane proteolysis and the subsequent release of functional polypeptides from their membrane anchors. Functional component of endoplasmic reticulum-associated degradation (ERAD) for misfolded membrane proteins. Required for the degradation process of some specific misfolded endoplasmic reticulum (ER) luminal proteins. Participates in the transfer of misfolded proteins from the ER to the cytosol, where they are destroyed by the proteasome in a ubiquitin-dependent manner. Functions in BIK, MPZ, PKD1, PTCRA, RHO, STEAP3 and TRAC processing. Involved in the regulation of exosomal secretion; inhibits the TSAP6-mediated secretion pathway. Involved in the regulation of apoptosis; modulates BIK-mediated apoptotic activity. Also plays a role in the regulation of spermatogenesis; inhibits apoptotic activity in spermatogonia. The protein is Rhomboid-related protein 4 (RHBDD1) of Homo sapiens (Human).